The chain runs to 38 residues: Augerpeptide hhe53 (38 aa).

Contains 2 disulfide bonds. In terms of tissue distribution, expressed by the venom duct.

The protein resides in the secreted. The protein is Augerpeptide hhe53 of Hastula hectica (Sea snail).